Here is a 64-residue protein sequence, read N- to C-terminus: Large ribosomal subunit protein bL35 (64 aa).

A compositionally biased stretch (basic residues) spans 1–22 (MPKMKSHTGMGKRVRVTGKGKI). The disordered stretch occupies residues 1–39 (MPKMKSHTGMGKRVRVTGKGKIVKQQAGLRHNLEKKPST).

The protein belongs to the bacterial ribosomal protein bL35 family.

The sequence is that of Large ribosomal subunit protein bL35 from Salinispora arenicola (strain CNS-205).